Here is a 592-residue protein sequence, read N- to C-terminus: Guanylate-binding protein 1 (592 aa).

Residues 1–311 form a GTPase domain (Globular) region; the sequence is MASEIHMTGP…NAISSGDLPC (311 aa). A GB1/RHD3-type G domain is found at 35–278; the sequence is TQPMVVVAIV…FCSYIFSNSK (244 aa). Residues 45 to 52, 67 to 69, and 97 to 101 each bind GTP; these read GLYRTGKS, LGS, and DTEGL. Position 156 is a phosphoserine; by PIM1 (Ser-156). Residues Lys-207, Lys-209, Lys-210, Lys-382, Lys-562, Lys-567, Lys-573, and Lys-587 each participate in a (Microbial infection) Glycyl lysine isopeptide (Lys-Gly) (interchain with G-Cter in ubiquitin) cross-link. Cys-589 is modified (cysteine methyl ester). A lipid anchor (S-farnesyl cysteine) is attached at Cys-589. Thr-590 is subject to Phosphothreonine; by PIM1. Positions 590–592 are cleaved as a propeptide — removed in mature form; that stretch reads TIS.

This sequence belongs to the TRAFAC class dynamin-like GTPase superfamily. GB1/RHD3 GTPase family. GB1 subfamily. Homodimer; homodimerization occurs upon GTP-binding and is required for the second hydrolysis step from GDP to GMP. Undergoes conformational changes and oligomerization upon GTP-binding and hydrolysis. Heterodimer with other family members, including GBP2, GBP3, GBP4 and GBP5. Dimerization regulates subcellular location to membranous structures. Interacts with SQSTM1. Interacts (when phosphorylated) with 14-3-3 protein sigma (SFN); leading to GBP1 retention in the cytosol and inactivation. In terms of processing, isoprenylation is required for proper subcellular location. Post-translationally, phosphorylated at Ser-156 by PIM1 in absence of infection, inhibits GBP1: phosphorylation promotes interaction with 14-3-3 protein sigma (SFN), leading to GBP1 retention in the cytosol. Dephosphorylated in response to infection, liberating GBP1. (Microbial infection) Ubiquitinated by S.flexneri IpaH9.8, leading to its degradation by the proteasome, thereby preventing its ability to promote host defense against bacterial infection.

The protein localises to the cytoplasmic vesicle membrane. The protein resides in the golgi apparatus membrane. Its subcellular location is the cell membrane. It is found in the cytoplasm. It localises to the cytosol. The protein localises to the secreted. It catalyses the reaction GTP + H2O = GDP + phosphate + H(+). It carries out the reaction GDP + H2O = GMP + phosphate + H(+). In terms of biological role, interferon (IFN)-inducible GTPase that plays important roles in innate immunity against a diverse range of bacterial, viral and protozoan pathogens. Hydrolyzes GTP to GMP in two consecutive cleavage reactions: GTP is first hydrolyzed to GDP and then to GMP in a processive manner. Following infection, recruited to the pathogen-containing vacuoles or vacuole-escaped bacteria and promotes both inflammasome assembly and autophagy. Acts as a positive regulator of inflammasome assembly by facilitating the detection of inflammasome ligands from pathogens. Involved in the lysis of pathogen-containing vacuoles, releasing pathogens into the cytosol. Following pathogen release in the cytosol, forms a protein coat in a GTPase-dependent manner that encapsulates pathogens and promotes the detection of ligands by pattern recognition receptors. Plays a key role in inflammasome assembly in response to infection by Gram-negative bacteria: following pathogen release in the cytosol, forms a protein coat that encapsulates Gram-negative bacteria and directly binds to lipopolysaccharide (LPS), disrupting the O-antigen barrier and unmasking lipid A that is that detected by the non-canonical inflammasome effector CASP4/CASP11. Also promotes recruitment of proteins that mediate bacterial cytolysis, leading to release double-stranded DNA (dsDNA) that activates the AIM2 inflammasome. Involved in autophagy by regulating bacteriolytic peptide generation via its interaction with ubiquitin-binding protein SQSTM1, which delivers monoubiquitinated proteins to autolysosomes for the generation of bacteriolytic peptides. Confers protection to several pathogens, including the bacterial pathogens L.monocytogenes and M.bovis BCG as well as the protozoan pathogen T.gondii. Exhibits antiviral activity against influenza virus. This chain is Guanylate-binding protein 1, found in Homo sapiens (Human).